Reading from the N-terminus, the 75-residue chain is RNA-binding protein KhpA (75 aa).

Residues 29 to 75 (SIILELKVAPEDMGKVIGKQGRIAKAIRTVIKAAAVKENKRVVVEII) enclose the KH domain.

Belongs to the KhpA RNA-binding protein family. In terms of assembly, forms a complex with KhpB.

Its subcellular location is the cytoplasm. In terms of biological role, a probable RNA chaperone. Forms a complex with KhpB which binds to cellular RNA and controls its expression. Plays a role in peptidoglycan (PG) homeostasis and cell length regulation. The chain is RNA-binding protein KhpA from Clostridium acetobutylicum (strain ATCC 824 / DSM 792 / JCM 1419 / IAM 19013 / LMG 5710 / NBRC 13948 / NRRL B-527 / VKM B-1787 / 2291 / W).